We begin with the raw amino-acid sequence, 387 residues long: Ferrochelatase (387 aa).

Fe cation contacts are provided by histidine 196 and glutamate 277.

This sequence belongs to the ferrochelatase family.

It localises to the cytoplasm. It catalyses the reaction heme b + 2 H(+) = protoporphyrin IX + Fe(2+). The protein operates within porphyrin-containing compound metabolism; protoheme biosynthesis; protoheme from protoporphyrin-IX: step 1/1. Its function is as follows. Catalyzes the ferrous insertion into protoporphyrin IX. This chain is Ferrochelatase, found in Synechococcus elongatus (strain ATCC 33912 / PCC 7942 / FACHB-805) (Anacystis nidulans R2).